A 658-amino-acid chain; its full sequence is Putative phospholipase B-like lamina ancestor (658 aa).

A signal peptide spans 1–29 (MLKVVGASWQKTRIGTYILIGAGLLVIGA). N-linked (GlcNAc...) asparagine glycans are attached at residues N229, N465, and N486.

Belongs to the phospholipase B-like family. Expressed in neural and glial progenitors prior to, but not after, differentiation. Not expressed in late third instar disks, but is expressed uniformly by early third instar disks, in the imaginal ring of the proventriculus and in the salivary gland.

Its subcellular location is the secreted. Its function is as follows. Putative phospholipase. Involved in the regulation of cellular plasticity in imaginal disks. The sequence is that of Putative phospholipase B-like lamina ancestor (lama) from Drosophila melanogaster (Fruit fly).